Here is a 315-residue protein sequence, read N- to C-terminus: Calcium homeostasis modulator protein 6 (315 aa).

At 1–21 (MEKFKAVLDLQIKHRSALGYG) the chain is on the cytoplasmic side. Residues 22–37 (LVTLLTAGGEKIFSTV) traverse the membrane as a helical segment. The Extracellular portion of the chain corresponds to 38 to 46 (VFQCPCTAT). 3 disulfide bridges follow: C41–C127, C43–C156, and C140–C147. Residues 47–68 (LNLTYGLVFLLVPALALFLLGY) traverse the membrane as a helical segment. Topologically, residues 69–103 (ALSARTWRLLTGCCSRSASTRSSSGLRSTLVCAQV) are cytoplasmic. The chain crosses the membrane as a helical span at residues 104–128 (SAVAALAPLTWVAVALLGGSFYQCA). The Extracellular segment spans residues 129–169 (VSGSTRLASYLCKDRNHSCIAKLPQVPCNKQEAEMQEILSQ). A helical transmembrane segment spans residues 170-192 (LKAQSQVLGWVLIAAVIFLLLVF). Residues 193 to 315 (KCVSRCFSPV…DAAMANTHGV (123 aa)) lie on the Cytoplasmic side of the membrane.

This sequence belongs to the CALHM family. Oligomerizes to form decameric and undecameric channels.

It localises to the cell membrane. It carries out the reaction ATP(in) = ATP(out). In terms of biological role, pore-forming subunit of an ATP-permeable channel. In response to pathogen-derived and proinflammatory stimuli, relocates from intracellular compartments to NK-dendritic cell and NK-macrophage immune synapses where it mediates ATP efflux and NK cell activation involved in antimicrobial and antitumor responses. May assemble to form gap junction channel-like structures with gating and ion conductance likely regulated by membrane lipids and voltage rather than by extracellular calcium levels. In Rattus norvegicus (Rat), this protein is Calcium homeostasis modulator protein 6.